The primary structure comprises 91 residues: MQPAARLLSRSVWKGPNIVPLPIREAMTKGTPIRTNARAATILPQFVGLKFQIHNGKEYVPIEISEDMVGHKLGEFAPTRKRFSYTQTKNK.

It belongs to the universal ribosomal protein uS19 family. Component of the mitochondrial small ribosomal subunit (mt-SSU). Mature yeast 74S mitochondrial ribosomes consist of a small (37S) and a large (54S) subunit. The 37S small subunit contains a 15S ribosomal RNA (15S mt-rRNA) and 34 different proteins. The 54S large subunit contains a 21S rRNA (21S mt-rRNA) and 46 different proteins.

The protein localises to the mitochondrion. Functionally, component of the mitochondrial ribosome (mitoribosome), a dedicated translation machinery responsible for the synthesis of mitochondrial genome-encoded proteins, including at least some of the essential transmembrane subunits of the mitochondrial respiratory chain. The mitoribosomes are attached to the mitochondrial inner membrane and translation products are cotranslationally integrated into the membrane. This chain is Small ribosomal subunit protein uS19m (RSM19), found in Saccharomyces cerevisiae (strain ATCC 204508 / S288c) (Baker's yeast).